The primary structure comprises 236 residues: Phosphoserine phosphatase (236 aa).

The active-site Nucleophile is the aspartate 30. Residues aspartate 30 and aspartate 32 each contribute to the Mg(2+) site. Aspartate 32 acts as the Proton donor in catalysis. Residues glutamate 39, arginine 76, 120-121 (SG), and lysine 169 each bind substrate. Aspartate 192 is a binding site for Mg(2+). Residue asparagine 195 coordinates substrate.

The protein belongs to the HAD-like hydrolase superfamily. SerB family. It depends on Mg(2+) as a cofactor.

The catalysed reaction is O-phospho-L-serine + H2O = L-serine + phosphate. It catalyses the reaction O-phospho-D-serine + H2O = D-serine + phosphate. The protein operates within amino-acid biosynthesis; L-serine biosynthesis; L-serine from 3-phospho-D-glycerate: step 3/3. The polypeptide is Phosphoserine phosphatase (Polaromonas sp. (strain JS666 / ATCC BAA-500)).